The primary structure comprises 337 residues: MFKKKAKEEKPSPVPDAQQNGELPNSGPIIYYIYESEEEEEEEEEEPPPEPPRPVNDKPHKFKDHYLKKPKFCDVCARMIVLNNKFGLRCKNCKTNIHHHCQSYVEFQKCFGKIPPGFRRAYSSPLYSNQQNACVKELMPFSASNRTDPVFDTLRVGVIMANKERKKGQDDKKNPMLEEEPEELPPKPEEKQEGDVPDGDKKGEKGGQDAKNKKAQPGFMQSHYFVALYRFKALEKDDLDFQAGERITVIDDSNEEWWRGKVGEKAGYFPANFIIRVRAAERVYKVTRSFVGNREIGQITLKKDQIVVQKGDEVNGYIKVSTGRKVGLFPLDFLQEI.

The segment covering 1-11 has biased composition (basic and acidic residues); sequence MFKKKAKEEKP. Disordered regions lie at residues 1–61 and 162–215; these read MFKK…KPHK and NKER…NKKA. Residues 35–48 are compositionally biased toward acidic residues; that stretch reads ESEEEEEEEEEEPP. A Phorbol-ester/DAG-type zinc finger spans residues 59–110; sequence PHKFKDHYLKKPKFCDVCARMIVLNNKFGLRCKNCKTNIHHHCQSYVEFQKC. Basic and acidic residues-rich tracts occupy residues 167–176 and 184–212; these read KGQDDKKNPM and LPPKPEEKQEGDVPDGDKKGEKGGQDAKN. 2 SH3 domains span residues 220–279 and 280–337; these read MQSH…RVRA and AERV…LQEI.

Component of a calcium channel complex with CACNA1S.

It localises to the cytoplasm. Its subcellular location is the cell membrane. The protein localises to the sarcolemma. The protein resides in the T-tubule. In terms of biological role, required for normal excitation-contraction coupling in skeletal muscle and for normal muscle contraction in response to membrane depolarization. Required for normal Ca(2+) release from the sarcplasmic reticulum, which ultimately leads to muscle contraction. Probably functions via its effects on muscle calcium channels. Increases CACNA1S channel activity, in addition to its role in enhancing the expression of CACNA1S at the cell membrane. Has a redundant role in promoting the expression of the calcium channel CACNA1S at the cell membrane. The protein is SH3 and cysteine-rich domain-containing protein 3 (stac3) of Xenopus tropicalis (Western clawed frog).